Here is a 394-residue protein sequence, read N- to C-terminus: Elongation factor Tu (394 aa).

One can recognise a tr-type G domain in the interval 10–204 (KPHVNVGTIG…ALDSYIPEPQ (195 aa)). Residues 19-26 (GHVDHGKT) are G1. 19–26 (GHVDHGKT) provides a ligand contact to GTP. Thr-26 lines the Mg(2+) pocket. The tract at residues 60-64 (GITIN) is G2. A G3 region spans residues 81–84 (DCPG). Residues 81–85 (DCPGH) and 136–139 (NKCD) each bind GTP. A G4 region spans residues 136-139 (NKCD). Residues 174-176 (SAL) are G5.

It belongs to the TRAFAC class translation factor GTPase superfamily. Classic translation factor GTPase family. EF-Tu/EF-1A subfamily. In terms of assembly, monomer.

The protein localises to the cytoplasm. The enzyme catalyses GTP + H2O = GDP + phosphate + H(+). Its function is as follows. GTP hydrolase that promotes the GTP-dependent binding of aminoacyl-tRNA to the A-site of ribosomes during protein biosynthesis. This Shewanella putrefaciens (Pseudomonas putrefaciens) protein is Elongation factor Tu.